The following is a 134-amino-acid chain: Translation initiation factor 5A (134 aa).

At Lys-36 the chain carries Hypusine.

The protein belongs to the eIF-5A family.

The protein resides in the cytoplasm. Functionally, functions by promoting the formation of the first peptide bond. In Korarchaeum cryptofilum (strain OPF8), this protein is Translation initiation factor 5A (eIF5A).